The primary structure comprises 605 residues: F-box/WD repeat-containing protein 1A (605 aa).

A homodimerization domain D region spans residues 128-177 (ASYEKEKELCVKYFEQWSESDQVEFVEHLISQMCHYQHGHINSYLKPMLQ). In terms of domain architecture, F-box spans 190–228 (DHIAENILSYLDAKSLCAAELVCKEWYRVTSDGMLWKKL). Positions 190-228 (DHIAENILSYLDAKSLCAAELVCKEWYRVTSDGMLWKKL) are required for down-regulation of SNAI1. 7 WD repeats span residues 301-338 (ETSKGVYCLQYDDQKIVSGLRDNTIKIWDKNTLECKRI), 341-378 (GHTGSVLCLQYDERVIITGSSDSTVRVWDVNTGEMLNT), 381-418 (HHCEAVLHLRFNNGMMVTCSKDRSIAVWDMASPTDITL), 424-461 (GHRAAVNVVDFDDKYIVSASGDRTIKVWNTSTCEFVRT), 464-503 (GHKRGIACLQYRDRLVVSGSSDNTIRLWDIECGACLRVLE), 505-541 (HEELVRCIRFDNKRIVSGAYDGKIKVWDLVAALDPRA), and 553-590 (EHSGRVFRLQFDEFQIVSSSHDDTILIWDFLNDPAAQA).

Homodimer. Self-associates. Component of the SCF(BTRC) complex formed of CUL1, SKP1, RBX1 and a BTRC dimer. Direct interaction with SKP1 occurs via the F-box domain. Interacts with phosphorylated ubiquitination substrates SMAD3 and SMAD4. Interacts with phosphorylated ubiquitination substrates CTNNB1, NFKBIA, NFKBIB, NFKBIE, NFKB1/nuclear factor NF-kappa-B p105 subunit, ATF4, CDC25A, DLG1, FBXO5 and SNAI1; the interaction requires the phosphorylation of the 2 serine residues in the substrate destruction motif D-S-G-X(2,3,4)-S. Binds UBQLN1. Interacts with CDC34 and UBE2R2. Interacts with FBXW11. Interacts with CUL4A and DDB1. Part of a SCF(BTRC)-like complex lacking CUL1, which is associated with phosphorylated NKBIA and RELA; RELA interacts directly with NFKBIA. Interacts with the phosphorylated form of GLI3. Interacts with CLU. Interacts with PER1 (phosphorylated), PER2 (phosphorylated) and PER3. Interacts with phosphorylated ubiquitination substrate CEP68. Interacts with ZC3H12A; this interaction occurs when ZC3H12A is phosphorylated in a IKBKB/IKKB-dependent manner. Interacts with HSF1; this interaction occurs during mitosis and induces HSF1 ubiquitin-dependent degradation, a process inhibited by CDC20. Interacts with NFE2L1. Interacts with INAVA. Interacts with IL10RA; this interaction leads to IL10RA ubiquitination and subsequent degradation. Interacts with REST. Interacts with KLF4; this interaction leads to KLF4 ubiquitination and subsequent degradation. Interacts with UBR2, as part of a SCF(BTRC) complex; the interaction mediates 'Lys-48'-linked ubiquitination of UBR2 and is regulated by DUSP22 in the T-cell receptor signaling pathway. As to quaternary structure, (Microbial infection) Interacts with vaccinia virus A49; this interaction inhibits NF-kappa-B activation. In terms of assembly, (Microbial infection) Interacts with HIV-1 Vpu. Post-translationally, ubiquitinated. Deubiquitinated by OTUD5, promoting its stability. Expressed in epididymis (at protein level).

The protein resides in the cytoplasm. The protein localises to the nucleus. The protein operates within protein modification; protein ubiquitination. Its function is as follows. Substrate recognition component of a SCF (SKP1-CUL1-F-box protein) E3 ubiquitin-protein ligase complex which mediates the ubiquitination and subsequent proteasomal degradation of target proteins. Recognizes and binds to phosphorylated target proteins. SCF(BTRC) mediates the ubiquitination of CTNNB1 and participates in Wnt signaling. SCF(BTRC) mediates the ubiquitination of phosphorylated NFKB1, ATF4, CDC25A, DLG1, FBXO5, PER1, SMAD3, SMAD4, SNAI1 and probably NFKB2. SCF(BTRC) mediates the ubiquitination of NFKBIA, NFKBIB and NFKBIE; the degradation frees the associated NFKB1 to translocate into the nucleus and to activate transcription. Ubiquitination of NFKBIA occurs at 'Lys-21' and 'Lys-22'. The SCF(FBXW11) complex also regulates NF-kappa-B by mediating ubiquitination of phosphorylated NFKB1: specifically ubiquitinates the p105 form of NFKB1, leading to its degradation. SCF(BTRC) mediates the ubiquitination of CEP68; this is required for centriole separation during mitosis. SCF(BTRC) mediates the ubiquitination and subsequent degradation of nuclear NFE2L1. Has an essential role in the control of the clock-dependent transcription via degradation of phosphorylated PER1 and PER2. May be involved in ubiquitination and subsequent proteasomal degradation through a DBB1-CUL4 E3 ubiquitin-protein ligase. Required for activation of NFKB-mediated transcription by IL1B, MAP3K14, MAP3K1, IKBKB and TNF. Required for proteolytic processing of GLI3. Mediates ubiquitination of REST, thereby leading to its proteasomal degradation. SCF(BTRC) mediates the ubiquitination and subsequent proteasomal degradation of KLF4; thereby negatively regulating cell pluripotency maintenance and embryogenesis. SCF(BTRC) acts as a regulator of mTORC1 signaling pathway by catalyzing ubiquitination and subsequent proteasomal degradation of phosphorylated DEPTOR, TFE3 and MITF. SCF(BTRC) directs 'Lys-48'-linked ubiquitination of UBR2 in the T-cell receptor signaling pathway. This Homo sapiens (Human) protein is F-box/WD repeat-containing protein 1A (BTRC).